A 420-amino-acid polypeptide reads, in one-letter code: Type II methyltransferase M.NmeDI (420 aa).

A disordered region spans residues 1-23 (MMSLKIQPAVPKKSDKPSATNRD). An SAM-dependent MTase C5-type domain is found at 56 to 411 (TLIFSFFSGA…MTLKSYLENH (356 aa)). The active site involves Cys148.

This sequence belongs to the class I-like SAM-binding methyltransferase superfamily. C5-methyltransferase family.

It carries out the reaction a 2'-deoxycytidine in DNA + S-adenosyl-L-methionine = a 5-methyl-2'-deoxycytidine in DNA + S-adenosyl-L-homocysteine + H(+). A methylase that recognizes the double-stranded sequence 5'-RCCGGB-3', methylates C-2 on both strands, and protects the DNA from cleavage by the NmeDI endonuclease. This is Type II methyltransferase M.NmeDI (nmeDIMP) from Neisseria meningitidis serogroup C.